A 264-amino-acid chain; its full sequence is Thymidylate synthase 2 (264 aa).

Residue arginine 21 participates in dUMP binding. Histidine 51 is a (6R)-5,10-methylene-5,6,7,8-tetrahydrofolate binding site. A dUMP-binding site is contributed by 126–127; the sequence is RR. Cysteine 146 (nucleophile) is an active-site residue. Residues 166 to 169, asparagine 177, and 207 to 209 each bind dUMP; these read RSAD and HIY. Position 169 (aspartate 169) interacts with (6R)-5,10-methylene-5,6,7,8-tetrahydrofolate. Serine 263 serves as a coordination point for (6R)-5,10-methylene-5,6,7,8-tetrahydrofolate.

It belongs to the thymidylate synthase family. Bacterial-type ThyA subfamily. As to quaternary structure, homodimer.

It is found in the cytoplasm. It carries out the reaction dUMP + (6R)-5,10-methylene-5,6,7,8-tetrahydrofolate = 7,8-dihydrofolate + dTMP. It participates in pyrimidine metabolism; dTTP biosynthesis. Catalyzes the reductive methylation of 2'-deoxyuridine-5'-monophosphate (dUMP) to 2'-deoxythymidine-5'-monophosphate (dTMP) while utilizing 5,10-methylenetetrahydrofolate (mTHF) as the methyl donor and reductant in the reaction, yielding dihydrofolate (DHF) as a by-product. This enzymatic reaction provides an intracellular de novo source of dTMP, an essential precursor for DNA biosynthesis. The chain is Thymidylate synthase 2 from Bacillus amyloliquefaciens (Bacillus velezensis).